The chain runs to 319 residues: Ankyrin repeat domain-containing protein 1 (319 aa).

Positions 61–89 (KTEKQREAELKKKKLEQRSKLENLEDLEI) form a coiled coil. 5 ANK repeats span residues 152–181 (YKRT…QIEF), 185–214 (LEST…KISA), 218–247 (LLST…DLNA), 251–280 (EGDT…DLNV), and 284–315 (AGKT…KASR).

In terms of assembly, interacts with TTN/titin and YBX1.

Its subcellular location is the nucleus. In terms of biological role, may play an important role in endothelial cell activation. May act as a nuclear transcription factor that negatively regulates the expression of cardiac genes. In Bos taurus (Bovine), this protein is Ankyrin repeat domain-containing protein 1 (ANKRD1).